Here is a 179-residue protein sequence, read N- to C-terminus: MENTLKTLYNNKICKDLQKKFRYKNIHQIPKLVKITINRGLGEAANNKQVLEKSMNEIAAITGQKPKITKSKKAIAGFKIRENIAIGLVVTLRRDKMYDFLNKLINLALPRIRDFRGISYKTFDGRGNYNLGLKEQIIFPEIKYDNVDKIRGLDITIVTTAKNDEEGLTLLKEFGMPFM.

The protein belongs to the universal ribosomal protein uL5 family. In terms of assembly, part of the 50S ribosomal subunit; contacts the 5S rRNA.

Its subcellular location is the plastid. The protein localises to the chloroplast. Binds 5S rRNA, forms part of the central protuberance of the 50S subunit. This Gracilaria tenuistipitata var. liui (Red alga) protein is Large ribosomal subunit protein uL5c (rpl5).